Here is a 414-residue protein sequence, read N- to C-terminus: Histidine--tRNA ligase (414 aa).

Belongs to the class-II aminoacyl-tRNA synthetase family. As to quaternary structure, homodimer.

It localises to the cytoplasm. The catalysed reaction is tRNA(His) + L-histidine + ATP = L-histidyl-tRNA(His) + AMP + diphosphate + H(+). The protein is Histidine--tRNA ligase of Synechococcus sp. (strain RCC307).